A 327-amino-acid polypeptide reads, in one-letter code: MATTVPLFSQFTCKTPITSSSTSSFQSKSPILLPINPINRRIAVHRHDFKVRASDVNDEWGPDSKGRGGDVDDEWGPEIGLNSSVAEKVAEEAIESAEETERLKRVLAGSLYGTDRGLSASSETRAEISELITQLESKNPNPAPNEALFLLNGKWILVYTSFVGLFPLLSRRISPLVKVDEISQTIDSDSFTVHNSVRFASPLATTSLSTNAKFEVRSPKRVQVKFEQGVIGTPQLTDSIEIPEFVEVLGQKIDLNPIKGLLTSVQDTASSVARTISSQPPLKFSLPGDSAQSWLLTTYLDKDLRISRGDGGSVFVLIREGSSLLNP.

A chloroplast-targeting transit peptide spans 1–84; the sequence is MATTVPLFSQ…WGPEIGLNSS (84 aa). Positions 56–78 are disordered; sequence VNDEWGPDSKGRGGDVDDEWGPE. Residues 85–107 are a coiled coil; that stretch reads VAEKVAEEAIESAEETERLKRVL.

It belongs to the PAP/fibrillin family. In terms of tissue distribution, expressed in anthers, sepals seeds, fruit coats, and leaves. Very low in petals and pistils and not detected in roots.

The protein resides in the plastid. It is found in the chloroplast. Functionally, may modulate the action of carotenoids. In Brassica campestris (Field mustard), this protein is Plastid lipid-associated protein 1, chloroplastic (PAP1).